Reading from the N-terminus, the 159-residue chain is MRIGHGFDVHAFGGEGPIIIGGVRIPYEKGLLAHSDGDVVLHALTDALLGAAALGDIGKLFPDTDPAFKGADSRELLREAWRRIQAKGYALGNVDVTIIAQAPRMLPHIPQMRVFIAEDLGCHMDDVNVKATTTEKLGFTGRGEGIACEAVALLIKATK.

A divalent metal cation is bound by residues D8 and H10. Residues 8 to 10 (DVH) and 34 to 35 (HS) each bind 4-CDP-2-C-methyl-D-erythritol 2-phosphate. H42 serves as a coordination point for a divalent metal cation. Residues 56–58 (DIG), 61–65 (FPDTD), 100–106 (AQAPRML), 132–135 (TTTE), F139, and R142 contribute to the 4-CDP-2-C-methyl-D-erythritol 2-phosphate site.

It belongs to the IspF family. In terms of assembly, homotrimer. A divalent metal cation serves as cofactor.

The enzyme catalyses 4-CDP-2-C-methyl-D-erythritol 2-phosphate = 2-C-methyl-D-erythritol 2,4-cyclic diphosphate + CMP. It participates in isoprenoid biosynthesis; isopentenyl diphosphate biosynthesis via DXP pathway; isopentenyl diphosphate from 1-deoxy-D-xylulose 5-phosphate: step 4/6. Functionally, involved in the biosynthesis of isopentenyl diphosphate (IPP) and dimethylallyl diphosphate (DMAPP), two major building blocks of isoprenoid compounds. Catalyzes the conversion of 4-diphosphocytidyl-2-C-methyl-D-erythritol 2-phosphate (CDP-ME2P) to 2-C-methyl-D-erythritol 2,4-cyclodiphosphate (ME-CPP) with a corresponding release of cytidine 5-monophosphate (CMP). The protein is 2-C-methyl-D-erythritol 2,4-cyclodiphosphate synthase of Escherichia coli O6:K15:H31 (strain 536 / UPEC).